The sequence spans 412 residues: Protein arginine N-methyltransferase 2 (412 aa).

The 223-residue stretch at 190-412 folds into the RMT2 domain; the sequence is TAADPDTYLN…YYYHPKISFA (223 aa). Residues Tyr197, Met227, 250–255, 271–273, 298–299, and Asp319 contribute to the S-adenosyl-L-methionine site; these read FGMGII, EAH, and WQ.

It belongs to the class I-like SAM-binding methyltransferase superfamily. RMT2 methyltransferase family. As to quaternary structure, monomer.

The protein resides in the cytoplasm. It is found in the nucleus. Functionally, S-adenosyl-L-methionine-dependent protein-arginine N-methyltransferase that methylates the delta-nitrogen atom of arginine residues to form N5-methylarginine (type IV) in target proteins. Monomethylates ribosomal protein L12. The chain is Protein arginine N-methyltransferase 2 from Candida glabrata (strain ATCC 2001 / BCRC 20586 / JCM 3761 / NBRC 0622 / NRRL Y-65 / CBS 138) (Yeast).